The sequence spans 157 residues: 2-C-methyl-D-erythritol 2,4-cyclodiphosphate synthase (157 aa).

A divalent metal cation-binding residues include D8 and H10. Residues D8–H10 and H34–S35 each bind 4-CDP-2-C-methyl-D-erythritol 2-phosphate. Residue H42 participates in a divalent metal cation binding. Residues D56 to G58, F61 to D65, A100 to A106, T132 to E135, F139, and R142 each bind 4-CDP-2-C-methyl-D-erythritol 2-phosphate.

The protein belongs to the IspF family. As to quaternary structure, homotrimer. The cofactor is a divalent metal cation.

It carries out the reaction 4-CDP-2-C-methyl-D-erythritol 2-phosphate = 2-C-methyl-D-erythritol 2,4-cyclic diphosphate + CMP. It functions in the pathway isoprenoid biosynthesis; isopentenyl diphosphate biosynthesis via DXP pathway; isopentenyl diphosphate from 1-deoxy-D-xylulose 5-phosphate: step 4/6. Involved in the biosynthesis of isopentenyl diphosphate (IPP) and dimethylallyl diphosphate (DMAPP), two major building blocks of isoprenoid compounds. Catalyzes the conversion of 4-diphosphocytidyl-2-C-methyl-D-erythritol 2-phosphate (CDP-ME2P) to 2-C-methyl-D-erythritol 2,4-cyclodiphosphate (ME-CPP) with a corresponding release of cytidine 5-monophosphate (CMP). The polypeptide is 2-C-methyl-D-erythritol 2,4-cyclodiphosphate synthase (Pseudomonas putida (strain ATCC 700007 / DSM 6899 / JCM 31910 / BCRC 17059 / LMG 24140 / F1)).